Reading from the N-terminus, the 89-residue chain is Small ribosomal subunit protein uS15 (89 aa).

It belongs to the universal ribosomal protein uS15 family. Part of the 30S ribosomal subunit. Forms a bridge to the 50S subunit in the 70S ribosome, contacting the 23S rRNA.

Its function is as follows. One of the primary rRNA binding proteins, it binds directly to 16S rRNA where it helps nucleate assembly of the platform of the 30S subunit by binding and bridging several RNA helices of the 16S rRNA. In terms of biological role, forms an intersubunit bridge (bridge B4) with the 23S rRNA of the 50S subunit in the ribosome. The sequence is that of Small ribosomal subunit protein uS15 from Magnetococcus marinus (strain ATCC BAA-1437 / JCM 17883 / MC-1).